Reading from the N-terminus, the 1059-residue chain is Carbamoyl phosphate synthase large chain (1059 aa).

The tract at residues 1 to 401 is carboxyphosphate synthetic domain; it reads MPKRQDISKI…AMLKAVRSLE (401 aa). ATP-binding residues include R129, R169, G175, G176, R208, I210, E215, G241, I242, H243, Q284, and E298. Positions 133–327 constitute an ATP-grasp 1 domain; that stretch reads KALMERLNEP…IAKMAAKIAV (195 aa). Positions 284, 298, and 300 each coordinate Mg(2+). Residues Q284, E298, and N300 each contribute to the Mn(2+) site. The interval 402–546 is oligomerization domain; sequence IGAIGLDDIT…YATYEQENES (145 aa). The segment at 547–929 is carbamoyl phosphate synthetic domain; sequence IISTKKSVLV…ALYKAFIASN (383 aa). Residues 671-861 form the ATP-grasp 2 domain; it reads DQVIKELALP…LAQLATRVML (191 aa). Positions 707, 746, 748, 752, 777, 778, 779, 780, 820, and 832 each coordinate ATP. Mg(2+)-binding residues include Q820, E832, and N834. 3 residues coordinate Mn(2+): Q820, E832, and N834. Residues 930–1059 enclose the MGS-like domain; the sequence is IKVPRYGNVL…SRSFTVKEMH (130 aa). The segment at 930–1059 is allosteric domain; the sequence is IKVPRYGNVL…SRSFTVKEMH (130 aa).

The protein belongs to the CarB family. As to quaternary structure, composed of two chains; the small (or glutamine) chain promotes the hydrolysis of glutamine to ammonia, which is used by the large (or ammonia) chain to synthesize carbamoyl phosphate. Tetramer of heterodimers (alpha,beta)4. Requires Mg(2+) as cofactor. It depends on Mn(2+) as a cofactor.

It carries out the reaction hydrogencarbonate + L-glutamine + 2 ATP + H2O = carbamoyl phosphate + L-glutamate + 2 ADP + phosphate + 2 H(+). It catalyses the reaction hydrogencarbonate + NH4(+) + 2 ATP = carbamoyl phosphate + 2 ADP + phosphate + 2 H(+). The protein operates within amino-acid biosynthesis; L-arginine biosynthesis; carbamoyl phosphate from bicarbonate: step 1/1. It functions in the pathway pyrimidine metabolism; UMP biosynthesis via de novo pathway; (S)-dihydroorotate from bicarbonate: step 1/3. Functionally, large subunit of the glutamine-dependent carbamoyl phosphate synthetase (CPSase). CPSase catalyzes the formation of carbamoyl phosphate from the ammonia moiety of glutamine, carbonate, and phosphate donated by ATP, constituting the first step of 2 biosynthetic pathways, one leading to arginine and/or urea and the other to pyrimidine nucleotides. The large subunit (synthetase) binds the substrates ammonia (free or transferred from glutamine from the small subunit), hydrogencarbonate and ATP and carries out an ATP-coupled ligase reaction, activating hydrogencarbonate by forming carboxy phosphate which reacts with ammonia to form carbamoyl phosphate. The sequence is that of Carbamoyl phosphate synthase large chain from Leuconostoc mesenteroides subsp. mesenteroides (strain ATCC 8293 / DSM 20343 / BCRC 11652 / CCM 1803 / JCM 6124 / NCDO 523 / NBRC 100496 / NCIMB 8023 / NCTC 12954 / NRRL B-1118 / 37Y).